The following is a 333-amino-acid chain: Acetoin:2,6-dichlorophenolindophenol oxidoreductase subunit alpha (333 aa).

In terms of assembly, tetramer of 2 alpha and 2 beta subunits. The cofactor is thiamine diphosphate.

It functions in the pathway ketone degradation; acetoin degradation. Its function is as follows. Catalyzes the 2,6-dichlorophenolindophenol-dependent cleavage of acetoin into acetate and acetaldehyde, in vitro. The alpha subunit is probably the catalytic subunit of the enzyme. The chain is Acetoin:2,6-dichlorophenolindophenol oxidoreductase subunit alpha (acoA) from Cupriavidus necator (strain ATCC 17699 / DSM 428 / KCTC 22496 / NCIMB 10442 / H16 / Stanier 337) (Ralstonia eutropha).